The chain runs to 515 residues: Meiotically up-regulated gene 68 protein (515 aa).

The segment at 165-204 is disordered; sequence LHSIESERNESSLSLDSGESEKKSEEDNGNGEQNYIPEQY.

Has a role in meiosis. The protein is Meiotically up-regulated gene 68 protein (mug68) of Schizosaccharomyces pombe (strain 972 / ATCC 24843) (Fission yeast).